Reading from the N-terminus, the 138-residue chain is Ribosome-binding factor A (138 aa).

The interval 119–138 (RSPEVQRDLGPSNEKDDEQN) is disordered.

This sequence belongs to the RbfA family. In terms of assembly, monomer. Binds 30S ribosomal subunits, but not 50S ribosomal subunits or 70S ribosomes.

It is found in the cytoplasm. In terms of biological role, one of several proteins that assist in the late maturation steps of the functional core of the 30S ribosomal subunit. Associates with free 30S ribosomal subunits (but not with 30S subunits that are part of 70S ribosomes or polysomes). Required for efficient processing of 16S rRNA. May interact with the 5'-terminal helix region of 16S rRNA. In Agrobacterium fabrum (strain C58 / ATCC 33970) (Agrobacterium tumefaciens (strain C58)), this protein is Ribosome-binding factor A.